Consider the following 305-residue polypeptide: rRNA 2'-O-methyltransferase fibrillarin (305 aa).

The segment at 1–70 (MAYTPGSRGG…SGGRGGAKGG (70 aa)) is disordered. Residues 7–69 (SRGGRGGSRG…SSGGRGGAKG (63 aa)) show a composition bias toward gly residues. A phosphoserine mark is found at S111 and S114. S-adenosyl-L-methionine-binding positions include 160–161 (TS), 179–180 (EF), 204–205 (DA), and 224–227 (DVAQ).

Belongs to the methyltransferase superfamily. Fibrillarin family. Component of box C/D small nucleolar ribonucleoprotein (snoRNP) particles. In terms of processing, by homology to other fibrillarins, some or all of the N-terminal domain arginines are modified to asymmetric dimethylarginine (DMA).

It localises to the nucleus. The protein resides in the nucleolus. It carries out the reaction L-glutaminyl-[histone H2A] + S-adenosyl-L-methionine = N(5)-methyl-L-glutaminyl-[histone H2A] + S-adenosyl-L-homocysteine + H(+). Its function is as follows. S-adenosyl-L-methionine-dependent methyltransferase that has the ability to methylate both RNAs and proteins. Involved in pre-rRNA processing by catalyzing the site-specific 2'-hydroxyl methylation of ribose moieties in pre-ribosomal RNA. Site specificity is provided by a guide RNA that base pairs with the substrate. Methylation occurs at a characteristic distance from the sequence involved in base pairing with the guide RNA. Also acts as a protein methyltransferase by mediating methylation of 'Gln-105' of histone H2A (H2AQ105me), a modification that impairs binding of the FACT complex and is specifically present at 35S ribosomal DNA locus. In Schizosaccharomyces pombe (strain 972 / ATCC 24843) (Fission yeast), this protein is rRNA 2'-O-methyltransferase fibrillarin (fib1).